The following is an 864-amino-acid chain: DNA mismatch repair protein MutS (864 aa).

An ATP-binding site is contributed by 613 to 620 (GPNMGGKS).

Belongs to the DNA mismatch repair MutS family.

This protein is involved in the repair of mismatches in DNA. It is possible that it carries out the mismatch recognition step. This protein has a weak ATPase activity. This chain is DNA mismatch repair protein MutS, found in Actinobacillus pleuropneumoniae serotype 7 (strain AP76).